Reading from the N-terminus, the 358-residue chain is NADH-quinone oxidoreductase subunit H (358 aa).

The next 8 membrane-spanning stretches (helical) occupy residues 29-49, 95-115, 130-150, 176-196, 206-226, 258-280, 297-317, and 334-354; these read LIKI…LTLW, GLFY…WAVI, LLLV…AGWA, FCFL…IVAV, GLGF…VYLI, GFAI…AVVM, GWIW…WIRA, and IFIP…LSPW.

Belongs to the complex I subunit 1 family. As to quaternary structure, NDH-1 is composed of 14 different subunits. Subunits NuoA, H, J, K, L, M, N constitute the membrane sector of the complex.

The protein localises to the cell inner membrane. It carries out the reaction a quinone + NADH + 5 H(+)(in) = a quinol + NAD(+) + 4 H(+)(out). Functionally, NDH-1 shuttles electrons from NADH, via FMN and iron-sulfur (Fe-S) centers, to quinones in the respiratory chain. The immediate electron acceptor for the enzyme in this species is believed to be ubiquinone. Couples the redox reaction to proton translocation (for every two electrons transferred, four hydrogen ions are translocated across the cytoplasmic membrane), and thus conserves the redox energy in a proton gradient. This subunit may bind ubiquinone. This chain is NADH-quinone oxidoreductase subunit H, found in Acidovorax sp. (strain JS42).